The sequence spans 203 residues: Small ribosomal subunit protein uS4 (203 aa).

The 73-residue stretch at 92–164 (TRLDSVVYLL…LEENRIRNVP (73 aa)) folds into the S4 RNA-binding domain.

This sequence belongs to the universal ribosomal protein uS4 family. Part of the 30S ribosomal subunit. Contacts protein S5. The interaction surface between S4 and S5 is involved in control of translational fidelity.

One of the primary rRNA binding proteins, it binds directly to 16S rRNA where it nucleates assembly of the body of the 30S subunit. Its function is as follows. With S5 and S12 plays an important role in translational accuracy. This is Small ribosomal subunit protein uS4 from Opitutus terrae (strain DSM 11246 / JCM 15787 / PB90-1).